The primary structure comprises 960 residues: Semaphorin-6C (960 aa).

The signal sequence occupies residues 1–23 (MPRAPHSMPLLLLLLLSLPQAQT). The Extracellular portion of the chain corresponds to 24 to 635 (AFPQDPIPLL…ASASRSIPIP (612 aa)). The 487-residue stretch at 29–515 (PIPLLTSDLQ…FPGCIVYLSL (487 aa)) folds into the Sema domain. Asn-69 is a glycosylation site (N-linked (GlcNAc...) asparagine). Cystine bridges form between Cys-110–Cys-120, Cys-138–Cys-147, Cys-261–Cys-372, and Cys-286–Cys-331. The N-linked (GlcNAc...) asparagine glycan is linked to Asn-285. A glycan (N-linked (GlcNAc...) asparagine) is linked at Asn-436. 4 disulfide bridges follow: Cys-478–Cys-509, Cys-518–Cys-536, Cys-524–Cys-569, and Cys-528–Cys-544. The tract at residues 555-624 (VDLTGNQESM…HTQGVRRDLS (70 aa)) is disordered. A helical transmembrane segment spans residues 636-656 (LLLACVAAAFALGASVSGLLV). The Cytoplasmic portion of the chain corresponds to 657–960 (SCACRRANRR…PAPHGSHFNF (304 aa)). Disordered stretches follow at residues 685–725 (LARL…SPPE), 745–792 (ASGG…PGQE), and 806–960 (HGPQ…HFNF). Residues 899-909 (RVPSGGPSRYS) show a composition bias toward low complexity. Basic and acidic residues predominate over residues 922–935 (PDGHRGRSLKRVDV). The segment covering 940 to 952 (SPKPPLATPPQPA) has biased composition (pro residues).

The protein belongs to the semaphorin family. As to expression, expressed in many regions of the developing nervous system, probably in neurons and their precursors, but also in nonneural tissue such as immature muscle and dermis. In adult, strong expression in the skeletal muscle and moderate expression in the brain, where cerebellum shows the highest expression. Also expressed in almost all areas of the CNS.

It is found in the cell membrane. Its function is as follows. Shows growth cone collapsing activity on dorsal root ganglion (DRG) neurons in vitro. May be a stop signal for the DRG neurons in their target areas, and possibly also for other neurons. May also be involved in the maintenance and remodeling of neuronal connections. This Rattus norvegicus (Rat) protein is Semaphorin-6C (Sema6c).